The chain runs to 797 residues: Striatin-3 (797 aa).

Met1 is subject to N-acetylmethionine. Gly residues-rich tracts occupy residues 1-13 and 23-43; these read MDEL…GGPG and GPGG…GGGP. The segment at 1–60 is disordered; sequence MDELAGGGGGGPGMAAPPRQQQGPGGNLGLSPGGNGAAGGGGPPASEGAGPAAGPELSRP. Over residues 44–56 the composition is skewed to low complexity; the sequence is PASEGAGPAAGPE. The interval 71–79 is caveolin-binding; the sequence is YIQHEWARF. Positions 77–136 form a coiled coil; sequence ARFEMERAHWEVERAELQARIAFLQGERKGQENLKKDLVRRIKMLEYALKQERAKYHKLK. Position 150 is a phosphothreonine (Thr150). Residues 166–183 form a calmodulin-binding region; the sequence is QNSQLTWKQGRQLLRQYL. Phosphoserine occurs at positions 202, 214, and 229. Disordered regions lie at residues 224–278 and 313–338; these read LNGG…KHRM and DGEG…SPTA. Residues 230 to 241 are compositionally biased toward basic and acidic residues; it reads PKQKGQEIKRSS. Positions 253 to 265 are enriched in acidic residues; sequence NADDSDEDEENDM. Residues Ser257 and Ser335 each carry the phosphoserine modification. WD repeat units lie at residues 478–517, 531–570, 584–623, 679–718, 721–760, and 767–797; these read SHFD…PAKK, AHIG…VDPY, GHTD…PCIC, QSNN…MIHS, AHLD…CVQE, and KLDE…KVFV.

Belongs to the WD repeat striatin family. In terms of assembly, tetramerizes. Part of the core of STRIPAK complexes composed of PP2A catalytic and scaffolding subunits, the striatins (PP2A regulatory subunits), the striatin-associated proteins MOB4, STRIP1 and STRIP2, PDCD10 and members of the STE20 kinases, such as STK24 and STK26. The STRIPAK complex can be extended by adapter proteins such as SLMAP:SIKE1 or CTTNBP2NL. Interacts with CDC42BPB.

Its subcellular location is the cytoplasm. The protein resides in the membrane. Its function is as follows. Calmodulin-binding scaffolding protein which is the center of the striatin-interacting phosphatase and kinase (STRIPAK) complexes. STRIPAK complexes have critical roles in protein (de)phosphorylation and are regulators of multiple signaling pathways including Hippo, MAPK, nuclear receptor and cytoskeleton remodeling. Different types of STRIPAK complexes are involved in a variety of biological processes such as cell growth, differentiation, apoptosis, metabolism and immune regulation. The protein is Striatin-3 of Homo sapiens (Human).